Consider the following 981-residue polypeptide: Polyhomeotic-like protein 3 (981 aa).

Over residues 1–28 (MDSEPSSGTSVSTTASSTTTTTITTSSS) the composition is skewed to low complexity. Disordered regions lie at residues 1-33 (MDSE…MQQP), 102-127 (LSSG…TSIL), 224-280 (LSSS…TAVT), and 307-407 (QIPL…SQSP). The segment covering 224 to 255 (LSSSQNGSPKSAGQTQSLTICHNKTTVTSSKI) has biased composition (polar residues). Ser-231, Ser-261, Ser-269, and Ser-312 each carry phosphoserine. Over residues 256-266 (SQRDPSPESKK) the composition is skewed to basic and acidic residues. Over residues 321-340 (QLLLQQQQQQIQPITLQSPS) the composition is skewed to low complexity. A compositionally biased stretch (polar residues) spans 360–373 (APSNAQPQHCSPVQ). Residues 381 to 395 (VSPNQAQSAQQSVVV) are compositionally biased toward low complexity. A phosphothreonine mark is found at Thr-607 and Thr-612. Ser-614 is modified (phosphoserine). The disordered stretch occupies residues 650–690 (KSPSDPTHASAPAPPLLIPAASTRSSSTSLASSTPSLENKP). Residues 667–686 (IPAASTRSSSTSLASSTPSL) show a composition bias toward low complexity. Residues Lys-689 and Lys-730 each participate in a glycyl lysine isopeptide (Lys-Gly) (interchain with G-Cter in SUMO2) cross-link. Residues 689–718 (KPPQAIVKPQILTHVIEGFVIQEGLEPFPV) carry the HD1 motif. Phosphoserine is present on residues Ser-759 and Ser-760. The segment at 774–808 (EEMDSELLKCEFCGKMGYPNEFLRSKRFCTMSCAK) adopts an FCS-type zinc-finger fold. The Zn(2+) site is built by Cys-783, Cys-786, Cys-802, and Cys-806. Lys-808 is covalently cross-linked (Glycyl lysine isopeptide (Lys-Gly) (interchain with G-Cter in SUMO2)). Disordered regions lie at residues 825–844 (RKPD…GPEG) and 863–888 (EDVA…ERER). Positions 917–981 (WTVDDVWAFI…CARINSLKDS (65 aa)) constitute an SAM domain.

As to quaternary structure, component of a PRC1-like complex. Ubiquitous expression.

The protein resides in the nucleus. Functionally, component of a Polycomb group (PcG) multiprotein PRC1-like complex, a complex class required to maintain the transcriptionally repressive state of many genes, including Hox genes, throughout development. PcG PRC1 complex acts via chromatin remodeling and modification of histones; it mediates monoubiquitination of histone H2A 'Lys-119', rendering chromatin heritably changed in its expressibility. This is Polyhomeotic-like protein 3 (Phc3) from Mus musculus (Mouse).